The chain runs to 340 residues: L-threonine 3-dehydrogenase (340 aa).

Zn(2+) is bound at residue Cys-38. Residues Thr-40 and His-43 each act as charge relay system in the active site. His-63, Glu-64, Cys-93, Cys-96, Cys-99, and Cys-107 together coordinate Zn(2+). NAD(+)-binding positions include Ile-175, Asp-195, Arg-200, 261-263, and 285-286; these read LGI and IY.

This sequence belongs to the zinc-containing alcohol dehydrogenase family. Homotetramer. The cofactor is Zn(2+).

It localises to the cytoplasm. It carries out the reaction L-threonine + NAD(+) = (2S)-2-amino-3-oxobutanoate + NADH + H(+). It functions in the pathway amino-acid degradation; L-threonine degradation via oxydo-reductase pathway; glycine from L-threonine: step 1/2. In terms of biological role, catalyzes the NAD(+)-dependent oxidation of L-threonine to 2-amino-3-ketobutyrate. In Xanthomonas euvesicatoria pv. vesicatoria (strain 85-10) (Xanthomonas campestris pv. vesicatoria), this protein is L-threonine 3-dehydrogenase.